A 121-amino-acid chain; its full sequence is Small ribosomal subunit protein uS11 (121 aa).

The protein belongs to the universal ribosomal protein uS11 family. In terms of assembly, part of the 30S ribosomal subunit. Interacts with proteins S7 and S18. Binds to IF-3.

Functionally, located on the platform of the 30S subunit, it bridges several disparate RNA helices of the 16S rRNA. Forms part of the Shine-Dalgarno cleft in the 70S ribosome. The sequence is that of Small ribosomal subunit protein uS11 from Mycoplasma genitalium (strain ATCC 33530 / DSM 19775 / NCTC 10195 / G37) (Mycoplasmoides genitalium).